A 102-amino-acid polypeptide reads, in one-letter code: Small ribosomal subunit protein uS10 (102 aa).

This sequence belongs to the universal ribosomal protein uS10 family. As to quaternary structure, part of the 30S ribosomal subunit.

Its function is as follows. Involved in the binding of tRNA to the ribosomes. This chain is Small ribosomal subunit protein uS10, found in Coprothermobacter proteolyticus (strain ATCC 35245 / DSM 5265 / OCM 4 / BT).